The following is a 118-amino-acid chain: Large ribosomal subunit protein bL20 (118 aa).

The protein belongs to the bacterial ribosomal protein bL20 family.

Binds directly to 23S ribosomal RNA and is necessary for the in vitro assembly process of the 50S ribosomal subunit. It is not involved in the protein synthesizing functions of that subunit. This chain is Large ribosomal subunit protein bL20, found in Alteromonas mediterranea (strain DSM 17117 / CIP 110805 / LMG 28347 / Deep ecotype).